The following is a 374-amino-acid chain: UDP-N-acetylglucosamine--N-acetylmuramyl-(pentapeptide) pyrophosphoryl-undecaprenol N-acetylglucosamine transferase (374 aa).

UDP-N-acetyl-alpha-D-glucosamine-binding positions include 13–15 (TGG), Asn-124, Arg-165, Ser-193, and Gln-294.

Belongs to the glycosyltransferase 28 family. MurG subfamily.

It is found in the cell inner membrane. It carries out the reaction di-trans,octa-cis-undecaprenyl diphospho-N-acetyl-alpha-D-muramoyl-L-alanyl-D-glutamyl-meso-2,6-diaminopimeloyl-D-alanyl-D-alanine + UDP-N-acetyl-alpha-D-glucosamine = di-trans,octa-cis-undecaprenyl diphospho-[N-acetyl-alpha-D-glucosaminyl-(1-&gt;4)]-N-acetyl-alpha-D-muramoyl-L-alanyl-D-glutamyl-meso-2,6-diaminopimeloyl-D-alanyl-D-alanine + UDP + H(+). The protein operates within cell wall biogenesis; peptidoglycan biosynthesis. Its function is as follows. Cell wall formation. Catalyzes the transfer of a GlcNAc subunit on undecaprenyl-pyrophosphoryl-MurNAc-pentapeptide (lipid intermediate I) to form undecaprenyl-pyrophosphoryl-MurNAc-(pentapeptide)GlcNAc (lipid intermediate II). This chain is UDP-N-acetylglucosamine--N-acetylmuramyl-(pentapeptide) pyrophosphoryl-undecaprenol N-acetylglucosamine transferase, found in Rhizobium meliloti (strain 1021) (Ensifer meliloti).